A 147-amino-acid chain; its full sequence is Large ribosomal subunit protein uL13 (147 aa).

This sequence belongs to the universal ribosomal protein uL13 family. In terms of assembly, part of the 50S ribosomal subunit.

Its function is as follows. This protein is one of the early assembly proteins of the 50S ribosomal subunit, although it is not seen to bind rRNA by itself. It is important during the early stages of 50S assembly. This Polaromonas naphthalenivorans (strain CJ2) protein is Large ribosomal subunit protein uL13.